The primary structure comprises 463 residues: DNA-binding protein K10 (463 aa).

Residues 1–13 (MVSKNQFYQNWTM) show a composition bias toward polar residues. The disordered stretch occupies residues 1 to 304 (MVSKNQFYQN…RNGPGPGPMM (304 aa)). A compositionally biased stretch (low complexity) spans 14 to 50 (QSQQQHPHQMQQQFQQQQQPNLQHRNNQSNNNNCNNN). The segment covering 85–94 (QMMFSSSQMP) has biased composition (polar residues). 7 consecutive repeat copies span residues 87–94 (MFSSSQMP), 95–102 (SDPLYIDF), 103–110 (SSPPPGFK), 111–118 (HNQVGSPK), 119–126 (KKSMKGIK), 127–134 (QQQHPSPN), and 135–142 (QQQPPSPN). A 7 X approximate tandem repeats region spans residues 87–142 (MFSSSQMPSDPLYIDFSSPPPGFKHNQVGSPKKKSMKGIKQQQHPSPNQQQPPSPN). Low complexity predominate over residues 142 to 193 (NQQQHPSPNQQQHPSPNQQQHPNSNQQQHLSPNQQQGKMNNQNNNHMNQSQQ). Residues 194-214 (PFNNQMNGSDWQRHPGNNPNQ) show a composition bias toward polar residues. Composition is skewed to pro residues over residues 225-270 (GPPP…PPVP) and 282-291 (GGPPPPPPPL). Residues 397–416 (DELFAQYKGQRDKFVSLYEA) constitute a DNA-binding region (H-T-H motif). Positions 426-463 (AATVKAKDAKSDKDKNAISSQSAAPKAGSAKDATIPNP) are disordered. Positions 430-441 (KAKDAKSDKDKN) are enriched in basic and acidic residues.

As to quaternary structure, interacts (via N-terminus) with sqd; the interaction is direct and may be involved in localization of sqd to the oocyte during oogenesis.

The protein localises to the nucleus. May be involved in localization of sqd to the oocyte during oogenesis. The protein is DNA-binding protein K10 (fs(1)K10) of Drosophila melanogaster (Fruit fly).